Consider the following 187-residue polypeptide: Lysozyme C-like protein DDB_G0288143 (187 aa).

An N-terminal signal peptide occupies residues 1–23 (MKVSNLISTITIASALCLSLTNA). Intrachain disulfides connect Cys-50–Cys-125, Cys-74–Cys-82, and Cys-78–Cys-97. Residue Glu-55 is part of the active site. The segment at 133–187 (QHGSHSSTSRDSSSSSSRDSTGTGYSSSGSGTSGSGSNSGQTGHFIPGQSGHGLN) is disordered. The span at 136-175 (SHSSTSRDSSSSSSRDSTGTGYSSSGSGTSGSGSNSGQTG) shows a compositional bias: low complexity.

This sequence belongs to the glycosyl hydrolase 22 family.

This chain is Lysozyme C-like protein DDB_G0288143, found in Dictyostelium discoideum (Social amoeba).